The sequence spans 298 residues: Porphobilinogen deaminase (298 aa).

Cys239 carries the S-(dipyrrolylmethanemethyl)cysteine modification.

This sequence belongs to the HMBS family. As to quaternary structure, monomer. Dipyrromethane serves as cofactor.

The enzyme catalyses 4 porphobilinogen + H2O = hydroxymethylbilane + 4 NH4(+). The protein operates within porphyrin-containing compound metabolism; protoporphyrin-IX biosynthesis; coproporphyrinogen-III from 5-aminolevulinate: step 2/4. Functionally, tetrapolymerization of the monopyrrole PBG into the hydroxymethylbilane pre-uroporphyrinogen in several discrete steps. The polypeptide is Porphobilinogen deaminase (Ehrlichia chaffeensis (strain ATCC CRL-10679 / Arkansas)).